We begin with the raw amino-acid sequence, 529 residues long: Probable feruloyl esterase B-1 (529 aa).

The N-terminal stretch at methionine 1–alanine 19 is a signal peptide. Intrachain disulfides connect cysteine 27-cysteine 75 and cysteine 63-cysteine 114. N-linked (GlcNAc...) asparagine glycosylation is found at asparagine 53, asparagine 64, asparagine 85, asparagine 98, and asparagine 138. Cystine bridges form between cysteine 187–cysteine 445, cysteine 256–cysteine 273, cysteine 282–cysteine 295, and cysteine 505–cysteine 527. Serine 188 acts as the Acyl-ester intermediate in catalysis. Asparagine 233 carries an N-linked (GlcNAc...) asparagine glycan. The Ca(2+) site is built by aspartate 257, aspartate 260, alanine 262, aspartate 264, and leucine 266. Asparagine 286, asparagine 290, and asparagine 354 each carry an N-linked (GlcNAc...) asparagine glycan. Catalysis depends on charge relay system residues aspartate 404 and histidine 444.

It belongs to the tannase family.

The protein resides in the secreted. The catalysed reaction is feruloyl-polysaccharide + H2O = ferulate + polysaccharide.. Its function is as follows. Involved in degradation of plant cell walls. Hydrolyzes the feruloyl-arabinose ester bond in arabinoxylans as well as the feruloyl-galactose and feruloyl-arabinose ester bonds in pectin. This Aspergillus terreus (strain NIH 2624 / FGSC A1156) protein is Probable feruloyl esterase B-1 (faeB-1).